The sequence spans 1184 residues: DNA polymerase III subunit alpha (1184 aa).

This sequence belongs to the DNA polymerase type-C family. DnaE subfamily. As to quaternary structure, the Pol III holoenzyme complex contains at least 10 different subunits organized into 3 functionally essential subassemblies: the Pol III core, the beta sliding clamp processivity factor and the clamp-loading complex. The Pol III core (subunits alpha, epsilon and theta) contains the polymerase and the 3'-5' exonuclease proofreading activities. The polymerase is tethered to the template via the dimeric beta sliding clamp processivity factor. The clamp loader (also called gamma complex) assembles the beta sliding clamp onto the primed template and plays a central role in the organization and communication at the replication fork. The clamp-loading complex contains delta, delta', psi and chi, and 3 copies of either or both of two different DnaX proteins, gamma and tau. The DNA replisome complex has a single clamp loader (3 tau and 1 each of delta, delta', psi and chi subunits) which binds 3 Pol III cores (1 core on the leading strand and 2 on the lagging strand) each with a beta sliding clamp dimer. Interacts with the beta-sliding clamp (DnaN). Co-immunoprecipitates with DarG in the presence and absence of darT.

The protein localises to the cytoplasm. The enzyme catalyses DNA(n) + a 2'-deoxyribonucleoside 5'-triphosphate = DNA(n+1) + diphosphate. Its function is as follows. DNA polymerase III is a complex, multichain enzyme responsible for most of the replicative synthesis in bacteria. Pol III also exhibits 3' to 5' exonuclease activity. The alpha chain is the DNA polymerase. The polypeptide is DNA polymerase III subunit alpha (dnaE1) (Mycobacterium tuberculosis (strain ATCC 25618 / H37Rv)).